The following is a 125-amino-acid chain: Small ribosomal subunit protein bS6 (125 aa).

Residues 94 to 125 (KAETGASSMMKTVEREEARKASQAEFAASNER) are disordered. The segment covering 105-115 (TVEREEARKAS) has biased composition (basic and acidic residues).

It belongs to the bacterial ribosomal protein bS6 family.

Its function is as follows. Binds together with bS18 to 16S ribosomal RNA. In Acidovorax ebreus (strain TPSY) (Diaphorobacter sp. (strain TPSY)), this protein is Small ribosomal subunit protein bS6.